The following is a 319-amino-acid chain: Cobalamin biosynthesis protein CobD (319 aa).

The next 5 helical transmembrane spans lie at 56–76, 78–98, 153–173, 204–224, and 296–316; these read VMWL…LALA, GIHP…ALAG, VDGI…LAMA, VANF…AVLC, and LMWV…YWLV.

Belongs to the CobD/CbiB family.

The protein localises to the cell membrane. The protein operates within cofactor biosynthesis; adenosylcobalamin biosynthesis. Its function is as follows. Converts cobyric acid to cobinamide by the addition of aminopropanol on the F carboxylic group. The sequence is that of Cobalamin biosynthesis protein CobD from Klebsiella pneumoniae subsp. pneumoniae (strain ATCC 700721 / MGH 78578).